We begin with the raw amino-acid sequence, 1158 residues long: Hephaestin (1158 aa).

The first 23 residues, 1 to 23 (MESGHLLWALLFMQSLWPQLTDG), serve as a signal peptide directing secretion. Plastocyanin-like domains lie at 24-206 (ATRV…LITC), 218-366 (QRQD…VKSC), 370-560 (PPVD…LLVC), 570-718 (KQKG…VSQC), 731-903 (AARI…LAIC), and 911-1067 (HGGR…SRTE). At 24–1110 (ATRVYYLGIR…PIKNVEMLAS (1087 aa)) the chain is on the extracellular side. G70 and Y73 together coordinate Na(+). Cu(2+) contacts are provided by H126 and H128. H126 is a binding site for O2. Residues K134, D152, and D153 each coordinate Ca(2+). N164 is a glycosylation site (N-linked (GlcNAc...) asparagine). C180 and C206 are disulfide-bonded. Cu(2+) is bound by residues H186 and H188. Residue H186 coordinates O2. N-linked (GlcNAc...) asparagine glycosylation occurs at N236. S265 is a binding site for Na(+). The cysteines at positions 285 and 366 are disulfide-linked. 3 residues coordinate Cu(2+): H304, C347, and H352. 3 residues coordinate Na(+): F416, G425, and Y428. A disulfide bridge links C534 with C560. N588 carries an N-linked (GlcNAc...) asparagine glycan. S617 is a Na(+) binding site. Cysteines 637 and 718 form a disulfide. 4 residues coordinate Cu(2+): H656, C699, H704, and M709. Residues N714 and N758 are each glycosylated (N-linked (GlcNAc...) asparagine). The Na(+) site is built by F769 and G778. Residues N829 and N873 are each glycosylated (N-linked (GlcNAc...) asparagine). C877 and C903 are joined by a disulfide. N-linked (GlcNAc...) asparagine glycosylation occurs at N931. The Cu(2+) site is built by H1000, H1003, H1005, H1045, C1046, H1047, H1051, and M1056. The O2 site is built by H1003 and H1005. H1047 serves as a coordination point for O2. Residues 1111-1131 (VLVAISVTLLLVVLALGGVVW) form a helical membrane-spanning segment. At 1132–1158 (YQHRQRKLRRNRRSILDDSFKLLSFKQ) the chain is on the cytoplasmic side. Residues S1145, S1150, and S1155 each carry the phosphoserine modification.

It belongs to the multicopper oxidase family. As to quaternary structure, part of a complex composed of SLC40A1/ferroportin, TF/transferrin and HEPH/hephaestin that transfers iron from cells to transferrin. Cu cation serves as cofactor. As to expression, expressed by intestinal absorptive cells (at protein level). Also detected in breast, colon, bone trabecular cells and fibroblasts.

It is found in the basolateral cell membrane. It catalyses the reaction 4 Fe(2+) + O2 + 4 H(+) = 4 Fe(3+) + 2 H2O. In terms of biological role, plasma membrane ferroxidase that mediates the extracellular conversion of ferrous/Fe(2+) iron into its ferric/Fe(3+) form. Couples ferroportin which specifically exports ferrous/Fe(2+) iron from cells to transferrin that only binds and shuttles extracellular ferric/Fe(3+) iron throughout the body. By helping iron transfer from cells to blood mainly contributes to dietary iron absorption by the intestinal epithelium and more generally regulates iron levels in the body. The sequence is that of Hephaestin from Homo sapiens (Human).